A 2593-amino-acid polypeptide reads, in one-letter code: Citrinin polyketide synthase (2593 aa).

An N-terminal acylcarrier protein transacylase domain (SAT) region spans residues 70–224 (KLLENLNAWI…YVSVIVDQRR (155 aa)). The active-site Nucleophile; for transacylase activity is the C139. The active-site Proton donor/acceptor; for transacylase activity is H258. The Ketosynthase family 3 (KS3) domain maps to 391–806 (DERIAVIGMA…GSNASMVVTQ (416 aa)). Active-site for beta-ketoacyl synthase activity residues include C555, H690, and H729. A malonyl-CoA:ACP transacylase (MAT) domain region spans residues 906–1191 (PDPKPVILCF…VAIWLEAGSN (286 aa)). The N-terminal hotdog fold stretch occupies residues 1291-1424 (PKGLTTFVGY…GTITFQAADS (134 aa)). Residues 1291 to 1603 (PKGLTTFVGY…YQKVSISGIR (313 aa)) enclose the PKS/mFAS DH domain. A product template (PT) domain region spans residues 1322–1601 (LLSGHIMANA…ISYQKVSISG (280 aa)). H1326 serves as the catalytic Proton acceptor; for dehydratase activity. Residues 1451–1603 (VADDILQGRN…YQKVSISGIR (153 aa)) form a C-terminal hotdog fold region. D1508 acts as the Proton donor; for dehydratase activity in catalysis. The interval 1636-1662 (VADSPLVDGSSTAVSGTPPTKKAPKAP) is disordered. The region spanning 1661–1738 (APSVDITGKM…SLVECMQRIL (78 aa)) is the Carrier domain. S1689 is modified (O-(pantetheine 4'-phosphoryl)serine). Active-site for methyltransferase activity residues include Y1955, H2067, and E2093. Positions 1960–2134 (INAVWIQQAE…ATHWKKILTS (175 aa)) are methyltransferase (CMeT) domain. Residues 2215 to 2459 (PAPTGHCVLV…KALPDFDGSL (245 aa)) are NADPH-binding (R) domain.

The cofactor is pantetheine 4'-phosphate.

It functions in the pathway mycotoxin biosynthesis. In terms of biological role, non-reducing polyketide synthase; part of the gene cluster that mediates the biosynthesis of the mycotoxin citrinin, a hepato-nephrotoxic compound to humans due to inhibition of respiration complex III. The pathway begins with the synthesis of a keto-aldehyde intermediate by the citrinin PKS (pksCT) from successive condensations of 4 malonyl-CoA units, presumably with a simple acetyl-CoA starter unit. Release of the keto-aldehyde intermediate is consistent with the presence of the C-terminal reductive release domain. Mp11 collaborates with pksCT by catalyzing the hydrolysis of ACP-bound acyl intermediates to free the ACP from stalled intermediates. Mpl2 then catalyzes the oxidation of the C-12 methyl of the ketone intermediate to an alcohol intermediate which is further oxidized by the oxidoreductase mpl7 to produce a bisaldehyde intermediate. The fourth catalytic step is catalyzed by the mpl4 aldehyde dehydrogenase. The final transformation is the reduction of C-3 by mpl6 to provide the chemically stable citrinin nucleus. The protein is Citrinin polyketide synthase of Monascus purpureus (Red mold).